We begin with the raw amino-acid sequence, 319 residues long: Acetyl-coenzyme A carboxylase carboxyl transferase subunit alpha (319 aa).

One can recognise a CoA carboxyltransferase C-terminal domain in the interval 35-296; that stretch reads NIDEEVHRLR…KTQLLADLAD (262 aa).

Belongs to the AccA family. As to quaternary structure, acetyl-CoA carboxylase is a heterohexamer composed of biotin carboxyl carrier protein (AccB), biotin carboxylase (AccC) and two subunits each of ACCase subunit alpha (AccA) and ACCase subunit beta (AccD).

Its subcellular location is the cytoplasm. The enzyme catalyses N(6)-carboxybiotinyl-L-lysyl-[protein] + acetyl-CoA = N(6)-biotinyl-L-lysyl-[protein] + malonyl-CoA. Its pathway is lipid metabolism; malonyl-CoA biosynthesis; malonyl-CoA from acetyl-CoA: step 1/1. Functionally, component of the acetyl coenzyme A carboxylase (ACC) complex. First, biotin carboxylase catalyzes the carboxylation of biotin on its carrier protein (BCCP) and then the CO(2) group is transferred by the carboxyltransferase to acetyl-CoA to form malonyl-CoA. The chain is Acetyl-coenzyme A carboxylase carboxyl transferase subunit alpha from Cronobacter sakazakii (strain ATCC BAA-894) (Enterobacter sakazakii).